Consider the following 117-residue polypeptide: Immunoglobulin heavy variable 3-11 (117 aa).

The first 19 residues, 1 to 19 (MEFGLSWVFLVAIIKGVQC), serve as a signal peptide directing secretion. Gln20 carries the pyrrolidone carboxylic acid modification. Residues 20–44 (QVQLVESGGGLVKPGGSLRLSCAAS) form a framework-1 region. Positions 20-117 (QVQLVESGGG…EDTAVYYCAR (98 aa)) constitute an Ig-like domain. Cys41 and Cys115 form a disulfide bridge. The segment at 45–52 (GFTFSDYY) is complementarity-determining-1. The framework-2 stretch occupies residues 53–69 (MSWIRQAPGKGLEWVSY). Residues 70–77 (ISSSSSYT) form a complementarity-determining-2 region. The framework-3 stretch occupies residues 78-115 (NYADSVKGRFTISRDNAKNSLYLQMNSLRAEDTAVYYC). Residues 116–117 (AR) form a complementarity-determining-3 region.

Immunoglobulins are composed of two identical heavy chains and two identical light chains; disulfide-linked.

Its subcellular location is the secreted. The protein resides in the cell membrane. Functionally, v region of the variable domain of immunoglobulin heavy chains that participates in the antigen recognition. Immunoglobulins, also known as antibodies, are membrane-bound or secreted glycoproteins produced by B lymphocytes. In the recognition phase of humoral immunity, the membrane-bound immunoglobulins serve as receptors which, upon binding of a specific antigen, trigger the clonal expansion and differentiation of B lymphocytes into immunoglobulins-secreting plasma cells. Secreted immunoglobulins mediate the effector phase of humoral immunity, which results in the elimination of bound antigens. The antigen binding site is formed by the variable domain of one heavy chain, together with that of its associated light chain. Thus, each immunoglobulin has two antigen binding sites with remarkable affinity for a particular antigen. The variable domains are assembled by a process called V-(D)-J rearrangement and can then be subjected to somatic hypermutations which, after exposure to antigen and selection, allow affinity maturation for a particular antigen. This is Immunoglobulin heavy variable 3-11 from Homo sapiens (Human).